The following is a 494-amino-acid chain: Cytochrome P450 2A10 (494 aa).

Lys-379 is modified (N6-acetyllysine). Heme is bound at residue Cys-439.

It belongs to the cytochrome P450 family. It depends on heme as a cofactor. In terms of tissue distribution, expressed in liver and lung as well as in nasal tissues.

Its subcellular location is the endoplasmic reticulum membrane. It is found in the microsome membrane. It catalyses the reaction an organic molecule + reduced [NADPH--hemoprotein reductase] + O2 = an alcohol + oxidized [NADPH--hemoprotein reductase] + H2O + H(+). In terms of biological role, catalyzes the oxygenation of a variety of substrates, including ethanol and procarcinogens such as N-nitrosodiethylamine and phenacetin. Exhibits a high coumarin 7-hydroxylase activity. Converts also testosterone to androstenedione. The polypeptide is Cytochrome P450 2A10 (CYP2A10) (Oryctolagus cuniculus (Rabbit)).